A 249-amino-acid chain; its full sequence is Elongation factor Ts (249 aa).

Positions 82-85 are involved in Mg(2+) ion dislocation from EF-Tu; the sequence is TDFV. A disordered region spans residues 215-249; it reads QAGQLAPEAESTTETADATSETTTEKSSAKKKKKK. The segment covering 222-236 has biased composition (low complexity); the sequence is EAESTTETADATSET.

The protein belongs to the EF-Ts family.

It is found in the cytoplasm. Its function is as follows. Associates with the EF-Tu.GDP complex and induces the exchange of GDP to GTP. It remains bound to the aminoacyl-tRNA.EF-Tu.GTP complex up to the GTP hydrolysis stage on the ribosome. In Rippkaea orientalis (strain PCC 8801 / RF-1) (Cyanothece sp. (strain PCC 8801)), this protein is Elongation factor Ts.